The primary structure comprises 583 residues: MSAFLHHCPFLKSSPGPSARKVATYLNLADRCPIIVRQISAKAAQSSEQNGLLPHKEPKRQLATTATQVAVSMSQSCPFVSSKIGLVKASPQVQEDVQPNLENQDTSGLISSLFSGLQSHQSTGPTHLLQDNFNRPTFSYDEFFTQKIVEKKKDHTYRIFKTVNRFAEVFPFAEDYSIAGRLGSQVSVWCSNDYLGMSRHPRVVKAIGDALKKHGAGAGGTRNISGTSNYHVALENELARLHQKDGALVFSSCFVANDSTLFTLAKMLPGCEIYSDMGNHASMIQGIRNSGAKRFIFRHNDASHLEELLSRSDPLTPKIVAFETVHSMDGAICPLEELCDVAHKYGALTFVDEVHAVGLYGAHGAGVGERDNVMHKIDIVSGTLGKAFGCVGGYIASTAALVDTVRSFAAGFIFTTSLPPMVLAGALESVRVLKSDEGQALRRAHQRNVKHMRQLLLDAGLPVVNCPSHIIPIRVGNAAKNSEVCDILLEKHNIYVQAINYPTVPRGEELLRLAPSPFHNPIMMNYFAEKLLDVWQEVGLPLNGPAQASCTFCDRPLHFDLMSEWEKSYFGNMEPRYITVAAQ.

Arg-158 contributes to the succinyl-CoA binding site. The pyridoxal 5'-phosphate site is built by Cys-253 and Phe-254. Positions 275 and 294 each coordinate succinyl-CoA. 3 residues coordinate pyridoxal 5'-phosphate: Ser-327, His-355, and Thr-383. Residue Lys-386 is part of the active site. Position 386 is an N6-(pyridoxal phosphate)lysine (Lys-386). Pyridoxal 5'-phosphate-binding residues include Thr-415 and Thr-416. A succinyl-CoA-binding site is contributed by Thr-503.

Belongs to the class-II pyridoxal-phosphate-dependent aminotransferase family. In terms of assembly, homodimer. Pyridoxal 5'-phosphate is required as a cofactor.

It is found in the mitochondrion inner membrane. The catalysed reaction is succinyl-CoA + glycine + H(+) = 5-aminolevulinate + CO2 + CoA. It functions in the pathway porphyrin-containing compound metabolism; protoporphyrin-IX biosynthesis; 5-aminolevulinate from glycine: step 1/1. Functionally, catalyzes the pyridoxal 5'-phosphate (PLP)-dependent condensation of succinyl-CoA and glycine to form aminolevulinic acid (ALA), with CoA and CO2 as by-products. Contributes significantly to heme formation during erythropoiesis. This chain is 5-aminolevulinate synthase, erythroid-specific, mitochondrial (alas2), found in Danio rerio (Zebrafish).